The sequence spans 462 residues: Calcitonin gene-related peptide type 1 receptor (462 aa).

The signal sequence occupies residues 1 to 22 (MEKKYILYFLFLLPFFMILVIA). Topologically, residues 23 to 140 (ETEEENPDDL…NTHEKVQTAL (118 aa)) are extracellular. 3 disulfides stabilise this stretch: Cys-49–Cys-75, Cys-66–Cys-106, and Cys-89–Cys-128. Residues Asn-67, Asn-119, and Asn-124 are each glycosylated (N-linked (GlcNAc...) asparagine). A helical transmembrane segment spans residues 141–165 (NLFYLTIIGHGLSIASLLISLGIFF). Residues 166–176 (YFKSLSCQRIT) lie on the Cytoplasmic side of the membrane. A helical transmembrane segment spans residues 177–199 (LHKNLFFSFVCNSIVTIIHLTAV). At 200–210 (ANNQALVATNP) the chain is on the extracellular side. A helical membrane pass occupies residues 211 to 239 (VSCKVFQFIHLYLMGCNYFWMLCEGIYLH). Over 240–253 (TLIVVAVFAEKQHL) the chain is Cytoplasmic. Residues 254–274 (MWYYFLGWGFPLIPACIHAVA) form a helical membrane-spanning segment. Residues 275–290 (RRLYYNDNCWISSDTH) lie on the Extracellular side of the membrane. The tract at residues 289–290 (TH) is required for RAMP3 interaction. Residues 291–315 (LLYIIHGPICAALLVNLFFLLNIVR) form a helical membrane-spanning segment. Topologically, residues 316 to 330 (VLITKLKVTHQAESN) are cytoplasmic. Residues 331–352 (LYMKAVRATLILVPLLGIEFVL) traverse the membrane as a helical segment. Residues 353 to 367 (IPWRPEGKIAEEVYD) lie on the Extracellular side of the membrane. Residues 368 to 388 (YIMHILVHYQGLLVSTIYCFF) traverse the membrane as a helical segment. The Cytoplasmic segment spans residues 389–462 (NGEVQAILRR…IVIKPEKLYD (74 aa)). 2 positions are modified to phosphoserine: Ser-421 and Ser-446.

Belongs to the G-protein coupled receptor 2 family. In terms of assembly, heterodimer of CALCRL and RAMP1; the receptor complex functions as CGRP receptor. Heterodimer of CALCRL and RAMP2 or CALCRL and RAMP3; the complexes function as adrenomedullin receptor. As to expression, detected in lung and coronary artery.

The protein localises to the cell membrane. In terms of biological role, g protein-coupled receptor which specificity is determined by its interaction with receptor-activity-modifying proteins (RAMPs). Together with RAMP1, form the receptor complex for calcitonin-gene-related peptides CALCA/CGRP1 and CALCB/CGRP2. Together with RAMP2 or RAMP3, function as receptor complexes for adrenomedullin (ADM and ADM2). Ligand binding causes a conformation change that triggers signaling via guanine nucleotide-binding proteins (G proteins) and modulates the activity of downstream effectors. Activates cAMP-dependent pathway. This chain is Calcitonin gene-related peptide type 1 receptor (CALCRL), found in Sus scrofa (Pig).